The sequence spans 106 residues: Glycine/glutamate-rich protein sgp1 (106 aa).

An N-terminal signal peptide occupies residues 1 to 20 (MKYSLIFILTLACLIASSLA). The interval 20-66 (ARPEGEEKPADDAAGDKKEEGAEGDKTAAGGDEGFTGGDGKNAGGAG) is disordered. The span at 22-45 (PEGEEKPADDAAGDKKEEGAEGDK) shows a compositional bias: basic and acidic residues. A compositionally biased stretch (gly residues) spans 50–66 (GDEGFTGGDGKNAGGAG).

It is found in the secreted. The sequence is that of Glycine/glutamate-rich protein sgp1 (sgp1) from Glossina morsitans morsitans (Savannah tsetse fly).